A 616-amino-acid polypeptide reads, in one-letter code: KIF-binding protein (616 aa).

The disordered stretch occupies residues 52-78 (EEEEESEAEGKEERRDGPESGGRRGES). Positions 59–78 (AEGKEERRDGPESGGRRGES) are enriched in basic and acidic residues.

The protein belongs to the KIF-binding protein family.

It is found in the cytoplasm. It localises to the cytoskeleton. Functionally, activator of KIF1B plus-end-directed microtubule motor activity. Required for organization of axonal microtubules, and axonal outgrowth and maintenance during peripheral and central nervous system development. This chain is KIF-binding protein, found in Xenopus tropicalis (Western clawed frog).